The following is a 469-amino-acid chain: Sulfate adenylyltransferase subunit 1 (469 aa).

The region spanning 22-237 (KEVLRFITCG…LEEVPVKSEE (216 aa)) is the tr-type G domain. Residues 31-38 (GSVDDGKS) form a G1 region. 31–38 (GSVDDGKS) is a binding site for GTP. The interval 89–93 (GITID) is G2. The segment at 110 to 113 (DTPG) is G3. GTP contacts are provided by residues 110–114 (DTPGH) and 165–168 (NKMD). Residues 165–168 (NKMD) are G4. The G5 stretch occupies residues 202 to 204 (SAK).

This sequence belongs to the TRAFAC class translation factor GTPase superfamily. Classic translation factor GTPase family. CysN/NodQ subfamily. As to quaternary structure, heterodimer composed of CysD, the smaller subunit, and CysN.

It carries out the reaction sulfate + ATP + H(+) = adenosine 5'-phosphosulfate + diphosphate. It functions in the pathway sulfur metabolism; hydrogen sulfide biosynthesis; sulfite from sulfate: step 1/3. Functionally, with CysD forms the ATP sulfurylase (ATPS) that catalyzes the adenylation of sulfate producing adenosine 5'-phosphosulfate (APS) and diphosphate, the first enzymatic step in sulfur assimilation pathway. APS synthesis involves the formation of a high-energy phosphoric-sulfuric acid anhydride bond driven by GTP hydrolysis by CysN coupled to ATP hydrolysis by CysD. This Methylorubrum extorquens (strain PA1) (Methylobacterium extorquens) protein is Sulfate adenylyltransferase subunit 1.